Consider the following 419-residue polypeptide: tRNA(Ile)-lysidine synthase (419 aa).

25-30 (SGGIDS) lines the ATP pocket.

The protein belongs to the tRNA(Ile)-lysidine synthase family.

It localises to the cytoplasm. It catalyses the reaction cytidine(34) in tRNA(Ile2) + L-lysine + ATP = lysidine(34) in tRNA(Ile2) + AMP + diphosphate + H(+). In terms of biological role, ligates lysine onto the cytidine present at position 34 of the AUA codon-specific tRNA(Ile) that contains the anticodon CAU, in an ATP-dependent manner. Cytidine is converted to lysidine, thus changing the amino acid specificity of the tRNA from methionine to isoleucine. The sequence is that of tRNA(Ile)-lysidine synthase from Actinobacillus pleuropneumoniae serotype 7 (strain AP76).